The following is a 216-amino-acid chain: Guanylate kinase (216 aa).

One can recognise a Guanylate kinase-like domain in the interval 15–193 (GNLFMVVAPS…ALEELRNVVR (179 aa)). Residue 22–29 (APSGAGKS) coordinates ATP.

It belongs to the guanylate kinase family.

The protein localises to the cytoplasm. It catalyses the reaction GMP + ATP = GDP + ADP. In terms of biological role, essential for recycling GMP and indirectly, cGMP. This is Guanylate kinase from Cupriavidus pinatubonensis (strain JMP 134 / LMG 1197) (Cupriavidus necator (strain JMP 134)).